The sequence spans 346 residues: Anthranilate phosphoribosyltransferase (346 aa).

Residues G81, 84–85 (GD), 91–94 (NVST), 109–117 (KHGGRSVSS), and S121 contribute to the 5-phospho-alpha-D-ribose 1-diphosphate site. An anthranilate-binding site is contributed by G81. S93 serves as a coordination point for Mg(2+). R167 lines the anthranilate pocket. Mg(2+) contacts are provided by D226 and E227.

The protein belongs to the anthranilate phosphoribosyltransferase family. In terms of assembly, homodimer. Mg(2+) serves as cofactor.

The catalysed reaction is N-(5-phospho-beta-D-ribosyl)anthranilate + diphosphate = 5-phospho-alpha-D-ribose 1-diphosphate + anthranilate. The protein operates within amino-acid biosynthesis; L-tryptophan biosynthesis; L-tryptophan from chorismate: step 2/5. Its function is as follows. Catalyzes the transfer of the phosphoribosyl group of 5-phosphorylribose-1-pyrophosphate (PRPP) to anthranilate to yield N-(5'-phosphoribosyl)-anthranilate (PRA). This chain is Anthranilate phosphoribosyltransferase, found in Marinomonas sp. (strain MWYL1).